Here is a 355-residue protein sequence, read N- to C-terminus: Phosphate acyltransferase (355 aa).

Belongs to the PlsX family. Homodimer. Probably interacts with PlsY.

It is found in the cytoplasm. The catalysed reaction is a fatty acyl-[ACP] + phosphate = an acyl phosphate + holo-[ACP]. Its pathway is lipid metabolism; phospholipid metabolism. Functionally, catalyzes the reversible formation of acyl-phosphate (acyl-PO(4)) from acyl-[acyl-carrier-protein] (acyl-ACP). This enzyme utilizes acyl-ACP as fatty acyl donor, but not acyl-CoA. This chain is Phosphate acyltransferase, found in Erythrobacter litoralis (strain HTCC2594).